The chain runs to 80 residues: uncharacterized protein (80 aa).

This is an uncharacterized protein from Invertebrate iridescent virus 6 (IIV-6).